The following is a 2157-amino-acid chain: DExH-box ATP-dependent RNA helicase DExH14 (2157 aa).

Positions 374-394 (KAASNTQSRMPTYGTQVTVQT) are disordered. The segment covering 375-394 (AASNTQSRMPTYGTQVTVQT) has biased composition (polar residues). Residues 517-699 (QTVYHTNENI…FLRVNTDTGL (183 aa)) enclose the Helicase ATP-binding 1 domain. 530–537 (APTGAGKT) is an ATP binding site. The short motif at 641–644 (DEVH) is the DEVH box element. Residues 734 to 932 (CYKKVVDSIK…SLKDNLNAEV (199 aa)) form the Helicase C-terminal 1 domain. The SEC63 1 domain occupies 1008 to 1315 (CTELGRVASH…LHAETYFTIS (308 aa)). In terms of domain architecture, Helicase ATP-binding 2 spans 1365–1540 (HVLYHTDNNV…WLGVGEIGLF (176 aa)). An ATP-binding site is contributed by 1378–1385 (APTGSGKT). A DEIH box motif is present at residues 1482 to 1485 (DEIH). The region spanning 1571-1780 (NKPAYAAICT…GTIGNKEDAV (210 aa)) is the Helicase C-terminal 2 domain. Residues 1839–2150 (PTMLGTIASQ…YLGFEQEHSI (312 aa)) enclose the SEC63 2 domain.

The protein belongs to the DExH box helicase family.

It is found in the nucleus. The catalysed reaction is ATP + H2O = ADP + phosphate + H(+). Functionally, RNA helicase that plays an essential role in pre-mRNA splicing as component of the U5 snRNP and U4/U6-U5 tri-snRNP complexes. Involved in spliceosome assembly, activation and disassembly. This Arabidopsis thaliana (Mouse-ear cress) protein is DExH-box ATP-dependent RNA helicase DExH14.